The following is a 385-amino-acid chain: 1-deoxy-D-xylulose 5-phosphate reductoisomerase 1 (385 aa).

NADPH-binding residues include Thr-11, Gly-12, Ser-13, Ile-14, Asn-39, and Asn-122. Lys-123 serves as a coordination point for 1-deoxy-D-xylulose 5-phosphate. Glu-124 contributes to the NADPH binding site. Asp-148 contributes to the Mn(2+) binding site. 4 residues coordinate 1-deoxy-D-xylulose 5-phosphate: Ser-149, Glu-150, Ser-174, and His-197. A Mn(2+)-binding site is contributed by Glu-150. Residue Gly-203 participates in NADPH binding. 1-deoxy-D-xylulose 5-phosphate-binding residues include Ser-210, Asn-215, Lys-216, and Glu-219. Residue Glu-219 coordinates Mn(2+).

The protein belongs to the DXR family. Requires Mg(2+) as cofactor. It depends on Mn(2+) as a cofactor.

It catalyses the reaction 2-C-methyl-D-erythritol 4-phosphate + NADP(+) = 1-deoxy-D-xylulose 5-phosphate + NADPH + H(+). Its pathway is isoprenoid biosynthesis; isopentenyl diphosphate biosynthesis via DXP pathway; isopentenyl diphosphate from 1-deoxy-D-xylulose 5-phosphate: step 1/6. In terms of biological role, catalyzes the NADPH-dependent rearrangement and reduction of 1-deoxy-D-xylulose-5-phosphate (DXP) to 2-C-methyl-D-erythritol 4-phosphate (MEP). The protein is 1-deoxy-D-xylulose 5-phosphate reductoisomerase 1 of Bacillus anthracis.